A 61-amino-acid chain; its full sequence is Large ribosomal subunit protein uL29 (61 aa).

The protein belongs to the universal ribosomal protein uL29 family.

This is Large ribosomal subunit protein uL29 from Xanthomonas euvesicatoria pv. vesicatoria (strain 85-10) (Xanthomonas campestris pv. vesicatoria).